The chain runs to 78 residues: Mitotic-spindle organizing protein 1 (78 aa).

An N-acetylalanine modification is found at alanine 2.

The protein belongs to the MOZART1 family. In terms of assembly, associates with the gamma-tubulin ring complex (gTuRC) consisting of TUBGCP2, TUBGCP3, TUBGCP4, TUBGCP5 and TUBGCP6 and gamma-tubulin TUBG1 or TUBG2; within the complex, interacts with TUBGCP3 and TUBGCP6 to form a luminal bridge with actin that stabilizes the initial structure during complex assembly. Interacts with TUBG1.

The protein resides in the cytoplasm. Its subcellular location is the cytoskeleton. It is found in the microtubule organizing center. It localises to the centrosome. The protein localises to the spindle. Its function is as follows. Required for the recruitment and the assembly of the gamma-tubulin ring complex (gTuRC) at the centrosome. The gTuRC regulates the minus-end nucleation of alpha-beta tubulin heterodimers that grow into microtubule protafilaments, a critical step in centrosome duplication and spindle formation. This is Mitotic-spindle organizing protein 1 (Mzt1) from Mus musculus (Mouse).